Reading from the N-terminus, the 379-residue chain is Cytochrome b (379 aa).

A run of 4 helical transmembrane segments spans residues 33–53 (FGSL…FLAM), 77–98 (WLIR…FIHV), 113–133 (WNIG…GYVL), and 178–198 (FFAF…VHLL). Heme b-binding residues include His83 and His97. 2 residues coordinate heme b: His182 and His196. His201 lines the a ubiquinone pocket. 4 consecutive transmembrane segments (helical) span residues 226–246 (TKDL…ALFF), 288–308 (LGGV…PLLN), 320–340 (VTQI…WIGG), and 347–367 (FTTI…ILIP).

The protein belongs to the cytochrome b family. In terms of assembly, the cytochrome bc1 complex contains 11 subunits: 3 respiratory subunits (MT-CYB, CYC1 and UQCRFS1), 2 core proteins (UQCRC1 and UQCRC2) and 6 low-molecular weight proteins (UQCRH/QCR6, UQCRB/QCR7, UQCRQ/QCR8, UQCR10/QCR9, UQCR11/QCR10 and a cleavage product of UQCRFS1). This cytochrome bc1 complex then forms a dimer. Requires heme b as cofactor.

Its subcellular location is the mitochondrion inner membrane. Functionally, component of the ubiquinol-cytochrome c reductase complex (complex III or cytochrome b-c1 complex) that is part of the mitochondrial respiratory chain. The b-c1 complex mediates electron transfer from ubiquinol to cytochrome c. Contributes to the generation of a proton gradient across the mitochondrial membrane that is then used for ATP synthesis. In Akodon reigi (Reig's grass mouse), this protein is Cytochrome b (MT-CYB).